The following is a 131-amino-acid chain: Methylglyoxal synthase (131 aa).

The MGS-like domain maps to 1–131; that stretch reads MKIALIAHDK…GDLDYRKLRK (131 aa). Substrate contacts are provided by residues His-8, Lys-12, 34–37, and 54–55; these read TGTT and SG. The active-site Proton donor/acceptor is the Asp-60. Residue His-87 coordinates substrate.

The protein belongs to the methylglyoxal synthase family.

It carries out the reaction dihydroxyacetone phosphate = methylglyoxal + phosphate. Functionally, catalyzes the formation of methylglyoxal from dihydroxyacetone phosphate. The polypeptide is Methylglyoxal synthase (Bacillus cereus (strain ATCC 14579 / DSM 31 / CCUG 7414 / JCM 2152 / NBRC 15305 / NCIMB 9373 / NCTC 2599 / NRRL B-3711)).